Here is a 776-residue protein sequence, read N- to C-terminus: MVALRRAVALNAVAIARLQTRALTARTRSLALASSQYRAYKTSSRQHAFHSQLENTPTPSAFQYQKPPTVENPQTLVEKIAQQYAVGLAPGKKIKAGDYIALAPHHCMSHDNTWPIAKKFLDIGASKIHNNRQVVFTLDHDVQNKSEANLKKYSLIHEFAEKHGVIHYPAGRGIGHQIMVEEGYAWPGTVSVASDSHSNMYGGIGCLGTAVVRTDAASIWATGQTWWQVPPVAKVTFTGILPPGVTGKDVIIALCGLFRDDQVLNHAVEFAGGESLPIDDRLTISNMTTEWGALAGVFPVDEMLISWYRGKATTNAMFGGSSKDRINHKRVDELEQNRLEADPNAKYAKELYLNLSTLSPIVAGPNSVKIATPLKNLEAEDIPVNKAYLVSCTNSRASDIAAAARVFREAAKENKDVKIAPGVNFYIAAASLPEQEIAEEAGDWQVLRDAGAQVLPAGCGPCIGLGTGLLEPGEVGISASNRNFKGRMGSTSAKAYLASPEIVAASALKGKIAGPGWYQKPEGVEKVIIGEGSGDYVADKALSIEDALDKLINEADALIAAAETSEGAKEQAASPTAAEGEESLTEILPGFPEKVEGEIVFCDSDNINTDGIYPGKYTYQDNVSVEKMAEVCMENYDTEFGKFAKAGDILVTGFNFGCGSSREQAATALLAKKIPLVVSGSFGNIFSRNSINNALMGVEVPRLVERLRETYKNDTEKPLTRRTGWKLVWDVRRSKVIVTEKDGSSWEQKVGELPANVQEIIARGGLEKWVKAKIDA.

The N-terminal 24 residues, 1–24 (MVALRRAVALNAVAIARLQTRALT), are a transit peptide targeting the mitochondrion. Residues Cys392, Cys459, and Cys462 each contribute to the [4Fe-4S] cluster site.

It belongs to the aconitase/IPM isomerase family. [4Fe-4S] cluster is required as a cofactor.

It is found in the mitochondrion. The enzyme catalyses (2R,3S)-homoisocitrate = cis-homoaconitate + H2O. It participates in amino-acid biosynthesis; L-lysine biosynthesis via AAA pathway; L-alpha-aminoadipate from 2-oxoglutarate: step 3/5. Catalyzes the reversible hydration of cis-homoaconitate to (2R,3S)-homoisocitrate, a step in the alpha-aminoadipate pathway for lysine biosynthesis. This is Homoaconitase, mitochondrial (LYS4) from Gibberella zeae (strain ATCC MYA-4620 / CBS 123657 / FGSC 9075 / NRRL 31084 / PH-1) (Wheat head blight fungus).